A 272-amino-acid chain; its full sequence is 2-C-methyl-D-erythritol 4-phosphate cytidylyltransferase (272 aa).

It belongs to the IspD/TarI cytidylyltransferase family. IspD subfamily.

The catalysed reaction is 2-C-methyl-D-erythritol 4-phosphate + CTP + H(+) = 4-CDP-2-C-methyl-D-erythritol + diphosphate. It functions in the pathway isoprenoid biosynthesis; isopentenyl diphosphate biosynthesis via DXP pathway; isopentenyl diphosphate from 1-deoxy-D-xylulose 5-phosphate: step 2/6. In terms of biological role, catalyzes the formation of 4-diphosphocytidyl-2-C-methyl-D-erythritol from CTP and 2-C-methyl-D-erythritol 4-phosphate (MEP). The sequence is that of 2-C-methyl-D-erythritol 4-phosphate cytidylyltransferase from Xanthomonas oryzae pv. oryzae (strain PXO99A).